The sequence spans 864 residues: Alanine--tRNA ligase (864 aa).

Residues histidine 534, histidine 538, cysteine 639, and histidine 643 each coordinate Zn(2+).

It belongs to the class-II aminoacyl-tRNA synthetase family. Zn(2+) serves as cofactor.

Its subcellular location is the cytoplasm. The enzyme catalyses tRNA(Ala) + L-alanine + ATP = L-alanyl-tRNA(Ala) + AMP + diphosphate. Catalyzes the attachment of alanine to tRNA(Ala) in a two-step reaction: alanine is first activated by ATP to form Ala-AMP and then transferred to the acceptor end of tRNA(Ala). Also edits incorrectly charged Ser-tRNA(Ala) and Gly-tRNA(Ala) via its editing domain. In Aster yellows witches'-broom phytoplasma (strain AYWB), this protein is Alanine--tRNA ligase.